Here is a 630-residue protein sequence, read N- to C-terminus: Membrane protein insertase YidC (630 aa).

5 helical membrane passes run 10–30 (LMFL…VMGP), 396–416 (MVGN…LILF), 470–490 (VPML…TVTI), 528–548 (LIGA…LYGF), and 571–591 (FFPI…VIYW).

The protein belongs to the OXA1/ALB3/YidC family. Type 1 subfamily. Interacts with the Sec translocase complex via SecD. Specifically interacts with transmembrane segments of nascent integral membrane proteins during membrane integration.

The protein resides in the cell inner membrane. Required for the insertion and/or proper folding and/or complex formation of integral membrane proteins into the membrane. Involved in integration of membrane proteins that insert both dependently and independently of the Sec translocase complex, as well as at least some lipoproteins. Aids folding of multispanning membrane proteins. This Caulobacter sp. (strain K31) protein is Membrane protein insertase YidC.